The following is a 193-amino-acid chain: Signal peptidase complex catalytic subunit SEC11 (193 aa).

Over 1–16 (MFSEELKAFRRLGIRH) the chain is Cytoplasmic. A helical; Signal-anchor for type II membrane protein transmembrane segment spans residues 17–41 (LLLQALNFASVIASGLMMWKGLGVI). Over 42–193 (TNTESPIVVV…LGLMALIQRE (152 aa)) the chain is Lumenal. Active-site charge relay system residues include Ser55 and His95. Asn106 carries N-linked (GlcNAc...) asparagine glycosylation. The active-site Charge relay system is Asp136. Positions 179–190 (GLLGILGLMALI) are C-terminal short (CTS) helix.

This sequence belongs to the peptidase S26B family. Component of the signal peptidase complex (SPC) composed of a catalytic subunit SEC11 and three accessory subunits SPC1, SPC2 and SPC3. The complex induces a local thinning of the ER membrane which is used to measure the length of the signal peptide (SP) h-region of protein substrates. This ensures the selectivity of the complex towards h-regions shorter than 18-20 amino acids. SPC associates with the translocon complex.

It localises to the endoplasmic reticulum membrane. The catalysed reaction is Cleavage of hydrophobic, N-terminal signal or leader sequences from secreted and periplasmic proteins.. Catalytic component of the signal peptidase complex (SPC) which catalyzes the cleavage of N-terminal signal sequences from nascent proteins as they are translocated into the lumen of the endoplasmic reticulum. Specifically cleaves N-terminal signal peptides that contain a hydrophobic alpha-helix (h-region) shorter than 18-20 amino acids. This chain is Signal peptidase complex catalytic subunit SEC11 (SEC11), found in Schizophyllum commune (strain H4-8 / FGSC 9210) (Split gill fungus).